The following is a 344-amino-acid chain: S-adenosylmethionine:tRNA ribosyltransferase-isomerase (344 aa).

Belongs to the QueA family. In terms of assembly, monomer.

It localises to the cytoplasm. It catalyses the reaction 7-aminomethyl-7-carbaguanosine(34) in tRNA + S-adenosyl-L-methionine = epoxyqueuosine(34) in tRNA + adenine + L-methionine + 2 H(+). The protein operates within tRNA modification; tRNA-queuosine biosynthesis. In terms of biological role, transfers and isomerizes the ribose moiety from AdoMet to the 7-aminomethyl group of 7-deazaguanine (preQ1-tRNA) to give epoxyqueuosine (oQ-tRNA). The chain is S-adenosylmethionine:tRNA ribosyltransferase-isomerase from Lactiplantibacillus plantarum (strain ATCC BAA-793 / NCIMB 8826 / WCFS1) (Lactobacillus plantarum).